Reading from the N-terminus, the 234-residue chain is Probable transcriptional regulatory protein PSPPH_2212 (234 aa).

The protein belongs to the TACO1 family.

Its subcellular location is the cytoplasm. The polypeptide is Probable transcriptional regulatory protein PSPPH_2212 (Pseudomonas savastanoi pv. phaseolicola (strain 1448A / Race 6) (Pseudomonas syringae pv. phaseolicola (strain 1448A / Race 6))).